Consider the following 1433-residue polypeptide: Regulatory protein CAT8 (1433 aa).

The segment covering 20–38 has biased composition (polar residues); sequence GSQALSGPSISNRTSSSEA. The disordered stretch occupies residues 20–40; sequence GSQALSGPSISNRTSSSEANP. A DNA-binding region (zn(2)-C6 fungal-type) is located at residues 70–97; the sequence is CDRCRSKKTRCDGKRPQCSQCAAVGFEC. Residues 936 to 946 show a composition bias toward polar residues; sequence KPLFGSQSKNS. Disordered stretches follow at residues 936-1024, 1137-1162, 1200-1236, and 1324-1433; these read KPLF…DTKK, QNPENSKNNQFHQKGKSTNMEKNNLS, SASADPGTNKKAVTNAGANFKPPSTGSNTSQGSILGS, and LNPT…QNAK. Basic and acidic residues-rich tracts occupy residues 947–965 and 994–1005; these read LENRQRTPNVKRENPEHEY and LKYEKDAKRNAK. Composition is skewed to polar residues over residues 1138 to 1162, 1221 to 1235, and 1326 to 1348; these read NPENSKNNQFHQKGKSTNMEKNNLS, PPSTGSNTSQGSILG, and PTDSILSQGMVSSVSTRNTSNQR. A compositionally biased stretch (low complexity) spans 1349–1362; the sequence is SLSSGNDSKGDSSS. 2 stretches are compositionally biased toward polar residues: residues 1363–1391 and 1418–1433; these read QENSKSATGNQLDTPSTLFQMRRTSSGPS and SNTDNVSDLFQWQNAK.

In terms of processing, could be the target of the SNF1/CAT1 - SNF4/CAT3 kinase complex.

It localises to the nucleus. Activator of the gluconeogenic enzymes FBP1 and PCK1 genes. This Saccharomyces cerevisiae (strain ATCC 204508 / S288c) (Baker's yeast) protein is Regulatory protein CAT8 (CAT8).